Here is a 286-residue protein sequence, read N- to C-terminus: Zinc finger protein ZAT5 (286 aa).

Disordered regions lie at residues methionine 1–serine 28, serine 40–serine 60, and glycine 131–serine 171. The C2H2-type 1 zinc-finger motif lies at tyrosine 115 to histidine 137. The span at glutamine 154 to serine 171 shows a compositional bias: polar residues. The C2H2-type 2 zinc-finger motif lies at histidine 190–histidine 212.

Expressed in flowers and siliques.

Its subcellular location is the nucleus. Functionally, probable transcription factor that may be involved in stress responses. This is Zinc finger protein ZAT5 (ZAT5) from Arabidopsis thaliana (Mouse-ear cress).